Here is a 449-residue protein sequence, read N- to C-terminus: UDP-N-acetylmuramoyl-tripeptide--D-alanyl-D-alanine ligase (449 aa).

106 to 112 (GSVGKTS) is an ATP binding site.

This sequence belongs to the MurCDEF family. MurF subfamily.

It is found in the cytoplasm. The catalysed reaction is D-alanyl-D-alanine + UDP-N-acetyl-alpha-D-muramoyl-L-alanyl-gamma-D-glutamyl-meso-2,6-diaminopimelate + ATP = UDP-N-acetyl-alpha-D-muramoyl-L-alanyl-gamma-D-glutamyl-meso-2,6-diaminopimeloyl-D-alanyl-D-alanine + ADP + phosphate + H(+). It participates in cell wall biogenesis; peptidoglycan biosynthesis. Its function is as follows. Involved in cell wall formation. Catalyzes the final step in the synthesis of UDP-N-acetylmuramoyl-pentapeptide, the precursor of murein. The sequence is that of UDP-N-acetylmuramoyl-tripeptide--D-alanyl-D-alanine ligase from Rickettsia prowazekii (strain Madrid E).